The sequence spans 201 residues: tRNA (guanine-N(7)-)-methyltransferase (201 aa).

The S-adenosyl-L-methionine site is built by Glu33, Glu58, Asp85, and Asp108. Asp108 is an active-site residue. Substrate contacts are provided by Lys112 and Asp144.

Belongs to the class I-like SAM-binding methyltransferase superfamily. TrmB family.

It catalyses the reaction guanosine(46) in tRNA + S-adenosyl-L-methionine = N(7)-methylguanosine(46) in tRNA + S-adenosyl-L-homocysteine. The protein operates within tRNA modification; N(7)-methylguanine-tRNA biosynthesis. Its function is as follows. Catalyzes the formation of N(7)-methylguanine at position 46 (m7G46) in tRNA. In Anaeromyxobacter dehalogenans (strain 2CP-C), this protein is tRNA (guanine-N(7)-)-methyltransferase.